The sequence spans 130 residues: Small ribosomal subunit protein uS11c (130 aa).

It belongs to the universal ribosomal protein uS11 family. Part of the 30S ribosomal subunit.

It is found in the plastid. The protein resides in the chloroplast. The chain is Small ribosomal subunit protein uS11c from Pyropia yezoensis (Susabi-nori).